The following is a 133-amino-acid chain: uncharacterized protein (133 aa).

Helical transmembrane passes span 5-27 (KLFF…FSLI), 42-64 (IAWN…YSLY), 77-99 (ALIS…TFSS), and 103-125 (LVWW…LLLK).

It is found in the cell membrane. This is an uncharacterized protein from Bacillus subtilis (strain 168).